The primary structure comprises 273 residues: Putative phosphoenolpyruvate synthase regulatory protein (273 aa).

153 to 160 contacts ADP; sequence AVSRAGKT.

Belongs to the pyruvate, phosphate/water dikinase regulatory protein family. PSRP subfamily.

The enzyme catalyses [pyruvate, water dikinase] + ADP = [pyruvate, water dikinase]-phosphate + AMP + H(+). It catalyses the reaction [pyruvate, water dikinase]-phosphate + phosphate + H(+) = [pyruvate, water dikinase] + diphosphate. Its function is as follows. Bifunctional serine/threonine kinase and phosphorylase involved in the regulation of the phosphoenolpyruvate synthase (PEPS) by catalyzing its phosphorylation/dephosphorylation. This chain is Putative phosphoenolpyruvate synthase regulatory protein, found in Stenotrophomonas maltophilia (strain K279a).